The primary structure comprises 201 residues: Auxin-binding protein 1 (201 aa).

The signal sequence occupies residues 1–38 (MAPDLSELAAAAAARGAYLAGVGVAVLLAASFLPVAES). Cys-40 and Cys-193 are oxidised to a cystine. Positions 95, 97, and 101 each coordinate Zn(2+). Asn-133 carries N-linked (GlcNAc...) asparagine glycosylation. His-144 lines the Zn(2+) pocket. Positions 198–201 (KDEL) match the Prevents secretion from ER motif.

Homodimer. Glycosylated. Expressed in roots, coleoptiles, leaves, stems, tassels and ears.

It is found in the endoplasmic reticulum lumen. Its function is as follows. Receptor for the plant hormone auxin. This is Auxin-binding protein 1 from Zea mays (Maize).